Reading from the N-terminus, the 456-residue chain is Chromosomal replication initiator protein DnaA 1 (456 aa).

The interval 1 to 68 is domain I, interacts with DnaA modulators; sequence MRAWEEFLLL…KANLINNNGK (68 aa). A domain II region spans residues 68 to 101; sequence KPIRVRVTSLDKSTPFKESQIQQEKTAYFTMQYG. A domain III, AAA+ region region spans residues 102–320; it reads DIDPQMSFAN…HALTTLAKRV (219 aa). The ATP site is built by S150, G152, K153, and T154. The tract at residues 321–456 is domain IV, binds dsDNA; the sequence is AYKKLSHQLL…AYQSLDLIVD (136 aa).

This sequence belongs to the DnaA family. As to quaternary structure, oligomerizes as a right-handed, spiral filament on DNA at oriC.

It localises to the cytoplasm. Plays an essential role in the initiation and regulation of chromosomal replication. ATP-DnaA binds to the origin of replication (oriC) to initiate formation of the DNA replication initiation complex once per cell cycle. Binds the DnaA box (a 9 base pair repeat at the origin) and separates the double-stranded (ds)DNA. Forms a right-handed helical filament on oriC DNA; dsDNA binds to the exterior of the filament while single-stranded (ss)DNA is stabiized in the filament's interior. The ATP-DnaA-oriC complex binds and stabilizes one strand of the AT-rich DNA unwinding element (DUE), permitting loading of DNA polymerase. After initiation quickly degrades to an ADP-DnaA complex that is not apt for DNA replication. Binds acidic phospholipids. In Chlamydia muridarum (strain MoPn / Nigg), this protein is Chromosomal replication initiator protein DnaA 1.